The chain runs to 860 residues: Elastin (860 aa).

The first 27 residues, 1-27 (MAGLTAVVPQPGVLLILLLNLLHPAQP), serve as a signal peptide directing secretion. Residues proline 35 and proline 72 each carry the 4-hydroxyproline modification. A Hydroxyproline modification is found at proline 84. Proline 105 carries the post-translational modification 4-hydroxyproline. Residues lysine 123 and lysine 127 each carry the allysine modification. 4 positions are modified to 4-hydroxyproline: proline 217, proline 230, proline 233, and proline 253. 3 positions are modified to allysine: lysine 299, lysine 318, and lysine 321. Position 346 is a 4-hydroxyproline (proline 346). Allysine occurs at positions 368 and 371. Proline 383 carries the post-translational modification Hydroxyproline. 4-hydroxyproline occurs at positions 399 and 405. 2 positions are modified to hydroxyproline: proline 410 and proline 415. An allysine mark is found at lysine 431, lysine 435, lysine 438, lysine 481, and lysine 484. 2 positions are modified to 4-hydroxyproline: proline 498 and proline 519. Allysine occurs at positions 534, 595, 599, and 603. 5 positions are modified to 4-hydroxyproline: proline 617, proline 626, proline 644, proline 653, and proline 661. Allysine is present on residues lysine 668 and lysine 671. Position 702 is a 4-hydroxyproline (proline 702). Residues lysine 719, lysine 723, lysine 783, and lysine 786 each carry the allysine modification. Position 832 is a 4-hydroxyproline (proline 832). Cysteines 850 and 855 form a disulfide.

The protein belongs to the elastin family. The polymeric elastin chains are cross-linked together into an extensible 3D network. Forms a ternary complex with BGN and MFAP2. Interacts with MFAP2 via divalent cations (calcium &gt; magnesium &gt; manganese) in a dose-dependent and saturating manner. Interacts with FBLN5 and FBN1. Forms a ternary complex with FBN1 and FBLN2 or FBLN5. Interacts with MFAP4 in a Ca (2+)-dependent manner; this interaction promotes ELN self-assembly. Interacts with EFEMP2 with moderate affinity. Elastin is formed through the cross-linking of its soluble precursor tropoelastin. Cross-linking is initiated through the action of lysyl oxidase on exposed lysines to form allysine. Subsequent spontaneous condensation reactions with other allysine or unmodified lysine residues result in various bi-, tri-, and tetrafunctional cross-links. The most abundant cross-links in mature elastin fibers are lysinonorleucine, allysine aldol, desmosine, and isodesmosine. Post-translationally, hydroxylation on proline residues within the sequence motif, GXPG, is most likely to be 4-hydroxy as this fits the requirement for 4-hydroxylation in vertebrates.

It localises to the secreted. The protein localises to the extracellular space. It is found in the extracellular matrix. Its function is as follows. Major structural protein of tissues such as aorta and nuchal ligament, which must expand rapidly and recover completely. Molecular determinant of the late arterial morphogenesis, stabilizing arterial structure by regulating proliferation and organization of vascular smooth muscle. The polypeptide is Elastin (Eln) (Mus musculus (Mouse)).